Reading from the N-terminus, the 152-residue chain is Transcriptional regulator MraZ (152 aa).

SpoVT-AbrB domains lie at 5–52 (ASAI…PVQE) and 81–124 (AHEC…DEAA).

It belongs to the MraZ family. Forms oligomers.

The protein resides in the cytoplasm. Its subcellular location is the nucleoid. The sequence is that of Transcriptional regulator MraZ from Shewanella piezotolerans (strain WP3 / JCM 13877).